Here is a 250-residue protein sequence, read N- to C-terminus: MVASSTVPSVASIFAPESLLKKTKAQKQSREQIVAAAAEKKSARQKKRELIAKRAEAYEAEYRAAEREQIELARKARAEGNYFVPHEPKLIFVVRIRGINNIPPKARKIMQLLRLLQINNGIFVKFNKAIKEMLQVVEPYVTYGIPNHKTVRELIYKRGFGKVNKQRIPLSDNAIIEAALGKYSILSVEDLIHEIYTVGPNFKQAANFLWPFKLSSPLGGWRERKFKHFIEGGDAGKRDEHINGLVQKML.

The protein belongs to the universal ribosomal protein uL30 family. Component of the large ribosomal subunit (LSU). Mature yeast ribosomes consist of a small (40S) and a large (60S) subunit. The 40S small subunit contains 1 molecule of ribosomal RNA (18S rRNA) and at least 33 different proteins. The large 60S subunit contains 3 rRNA molecules (25S, 5.8S and 5S rRNA) and at least 46 different proteins.

The protein resides in the cytoplasm. Its subcellular location is the nucleus. It localises to the nucleolus. Its function is as follows. Component of the ribosome, a large ribonucleoprotein complex responsible for the synthesis of proteins in the cell. The small ribosomal subunit (SSU) binds messenger RNAs (mRNAs) and translates the encoded message by selecting cognate aminoacyl-transfer RNA (tRNA) molecules. The large subunit (LSU) contains the ribosomal catalytic site termed the peptidyl transferase center (PTC), which catalyzes the formation of peptide bonds, thereby polymerizing the amino acids delivered by tRNAs into a polypeptide chain. The nascent polypeptides leave the ribosome through a tunnel in the LSU and interact with protein factors that function in enzymatic processing, targeting, and the membrane insertion of nascent chains at the exit of the ribosomal tunnel. In Schizosaccharomyces pombe (strain 972 / ATCC 24843) (Fission yeast), this protein is Large ribosomal subunit protein uL30B (rpl702).